Consider the following 107-residue polypeptide: Glutaconyl-CoA decarboxylase subunit delta (107 aa).

Residues 10–32 form a helical membrane-spanning segment; it reads MINMTIVFGVLIVLGILMVLIHA. The segment at 37 to 60 is disordered; the sequence is KKVQGKKKPVVAKPAPSAAASKRQ. Residues 47-57 show a composition bias toward low complexity; that stretch reads VAKPAPSAAAS.

It belongs to the OadG family. As to quaternary structure, heterooctamer consisting of two alpha, two beta, two gamma and two delta subunits.

It is found in the cell membrane. The catalysed reaction is (2E)-glutaconyl-CoA + Na(+)(in) + H(+) = (2E)-butenoyl-CoA + Na(+)(out) + CO2. It functions in the pathway amino-acid degradation; L-glutamate degradation via hydroxyglutarate pathway; crotonoyl-CoA from L-glutamate: step 5/5. Its function is as follows. Part of the primary sodium pump glutaconyl-CoA decarboxylase (GCD). Possible membrane anchor for the alpha subunit. The protein is Glutaconyl-CoA decarboxylase subunit delta (gcdD) of Acidaminococcus fermentans (strain ATCC 25085 / DSM 20731 / CCUG 9996 / CIP 106432 / VR4).